The sequence spans 305 residues: Aurasperone B biosynthesis cluster protein A (305 aa).

The signal sequence occupies residues 1-26 (MSIFFSIRFWPAAISAAILWLPQVLG). Residues Asn29, Asn34, Asn64, Asn83, Asn132, Asn183, Asn218, and Asn288 are each glycosylated (N-linked (GlcNAc...) asparagine).

It belongs to the bfoA family.

Its function is as follows. Part of the gene cluster that mediates the biosynthesis of aurasperone B, a dimeric gamma-naphthopyrone. The first step in the biosynthesis of aurasperone B is the production of gamma-naphthopyrone precursor YWA1 by the non-reducing polyketide synthase albA, via condensation of one acetyl-CoA starter unit with 6 malonyl-CoA units. YWA1 is then methylated by aunE at position C-6 to yield foncesin which is further methylated at position C-8 by aunD to produce fonsecin B. A key enzyme in the biosynthetic pathway is the cytochrome P450 monooxygenase aunB which catalyzes the oxidative dimerization of fonsecin B to aurasperone B. AunB also catalyzes the oxidative dimerization of rubrofusarin B into aurasperone A. This chain is Aurasperone B biosynthesis cluster protein A, found in Aspergillus niger (strain ATCC 1015 / CBS 113.46 / FGSC A1144 / LSHB Ac4 / NCTC 3858a / NRRL 328 / USDA 3528.7).